The primary structure comprises 102 residues: Large ribosomal subunit protein bL21 (102 aa).

It belongs to the bacterial ribosomal protein bL21 family. Part of the 50S ribosomal subunit. Contacts protein L20.

Functionally, this protein binds to 23S rRNA in the presence of protein L20. In Lawsonia intracellularis, this protein is Large ribosomal subunit protein bL21.